Here is a 648-residue protein sequence, read N- to C-terminus: Macrolide export ATP-binding/permease protein MacB (648 aa).

One can recognise an ABC transporter domain in the interval 5 to 243; that stretch reads LELKDIRRSY…TGGTEPVVNT (239 aa). 41 to 48 serves as a coordination point for ATP; the sequence is GASGSGKS. A run of 4 helical transmembrane segments spans residues 273 to 293, 523 to 543, 576 to 596, and 611 to 631; these read LLTM…VVVG, LFLT…VMNI, AVLV…LIAF, and PLAL…FGWL.

Belongs to the ABC transporter superfamily. Macrolide exporter (TC 3.A.1.122) family. As to quaternary structure, homodimer. Part of the tripartite efflux system MacAB-TolC, which is composed of an inner membrane transporter, MacB, a periplasmic membrane fusion protein, MacA, and an outer membrane component, TolC. The complex forms a large protein conduit and can translocate molecules across both the inner and outer membranes. Interacts with MacA.

The protein localises to the cell inner membrane. In terms of biological role, part of the tripartite efflux system MacAB-TolC. MacB is a non-canonical ABC transporter that contains transmembrane domains (TMD), which form a pore in the inner membrane, and an ATP-binding domain (NBD), which is responsible for energy generation. Confers resistance against macrolides. In Escherichia coli (strain UTI89 / UPEC), this protein is Macrolide export ATP-binding/permease protein MacB.